The primary structure comprises 145 residues: SsrA-binding protein (145 aa).

The protein belongs to the SmpB family.

It is found in the cytoplasm. Required for rescue of stalled ribosomes mediated by trans-translation. Binds to transfer-messenger RNA (tmRNA), required for stable association of tmRNA with ribosomes. tmRNA and SmpB together mimic tRNA shape, replacing the anticodon stem-loop with SmpB. tmRNA is encoded by the ssrA gene; the 2 termini fold to resemble tRNA(Ala) and it encodes a 'tag peptide', a short internal open reading frame. During trans-translation Ala-aminoacylated tmRNA acts like a tRNA, entering the A-site of stalled ribosomes, displacing the stalled mRNA. The ribosome then switches to translate the ORF on the tmRNA; the nascent peptide is terminated with the 'tag peptide' encoded by the tmRNA and targeted for degradation. The ribosome is freed to recommence translation, which seems to be the essential function of trans-translation. This is SsrA-binding protein from Mycoplasma genitalium (strain ATCC 33530 / DSM 19775 / NCTC 10195 / G37) (Mycoplasmoides genitalium).